The chain runs to 198 residues: Pyridoxal 5'-phosphate synthase subunit PdxT (198 aa).

Glycine 52 to serine 54 contributes to the L-glutamine binding site. The active-site Nucleophile is the cysteine 84. Residues arginine 115 and isoleucine 143–arginine 144 contribute to the L-glutamine site. Active-site charge relay system residues include histidine 179 and glutamate 181.

The protein belongs to the glutaminase PdxT/SNO family. As to quaternary structure, in the presence of PdxS, forms a dodecamer of heterodimers. Only shows activity in the heterodimer.

It carries out the reaction aldehydo-D-ribose 5-phosphate + D-glyceraldehyde 3-phosphate + L-glutamine = pyridoxal 5'-phosphate + L-glutamate + phosphate + 3 H2O + H(+). It catalyses the reaction L-glutamine + H2O = L-glutamate + NH4(+). It functions in the pathway cofactor biosynthesis; pyridoxal 5'-phosphate biosynthesis. Functionally, catalyzes the hydrolysis of glutamine to glutamate and ammonia as part of the biosynthesis of pyridoxal 5'-phosphate. The resulting ammonia molecule is channeled to the active site of PdxS. The polypeptide is Pyridoxal 5'-phosphate synthase subunit PdxT (Methanococcoides burtonii (strain DSM 6242 / NBRC 107633 / OCM 468 / ACE-M)).